A 448-amino-acid polypeptide reads, in one-letter code: 26S proteasome regulatory subunit 4 homolog (448 aa).

Polar residues predominate over residues 1–10 (MGQAQSGNFS). A disordered region spans residues 1–58 (MGQAQSGNFSNFGDGANGDNKKDQKKDKPKYEPPVPTRTGRRKKKAQSGPDASAKLPT). Residues 19 to 31 (DNKKDQKKDKPKY) are compositionally biased toward basic and acidic residues. 232–239 (GAPGTGKT) is a binding site for ATP.

Belongs to the AAA ATPase family.

Its subcellular location is the cytoplasm. The protein resides in the nucleus. Its function is as follows. The 26S proteasome is involved in the ATP-dependent degradation of ubiquitinated proteins. The regulatory (or ATPase) complex confers ATP dependency and substrate specificity to the 26S complex. This chain is 26S proteasome regulatory subunit 4 homolog (mts2), found in Schizosaccharomyces pombe (strain 972 / ATCC 24843) (Fission yeast).